Here is a 144-residue protein sequence, read N- to C-terminus: Ribosomal RNA large subunit methyltransferase H (144 aa).

S-adenosyl-L-methionine is bound by residues Leu-63, Gly-92, and 111-116; that span reads LSPLTF.

This sequence belongs to the RNA methyltransferase RlmH family. Homodimer.

It is found in the cytoplasm. The enzyme catalyses pseudouridine(1915) in 23S rRNA + S-adenosyl-L-methionine = N(3)-methylpseudouridine(1915) in 23S rRNA + S-adenosyl-L-homocysteine + H(+). Specifically methylates the pseudouridine at position 1915 (m3Psi1915) in 23S rRNA. The chain is Ribosomal RNA large subunit methyltransferase H from Synechococcus sp. (strain CC9902).